We begin with the raw amino-acid sequence, 320 residues long: uncharacterized protein (320 aa).

It to S.pombe SpAC23H3.12c.

This is an uncharacterized protein from Saccharomyces cerevisiae (strain ATCC 204508 / S288c) (Baker's yeast).